A 360-amino-acid polypeptide reads, in one-letter code: Phosphoserine aminotransferase (360 aa).

L-glutamate is bound at residue R43. Pyridoxal 5'-phosphate-binding positions include 77 to 78 (AS), W103, T152, D172, and Q195. Position 196 is an N6-(pyridoxal phosphate)lysine (K196). 237–238 (NT) provides a ligand contact to pyridoxal 5'-phosphate.

This sequence belongs to the class-V pyridoxal-phosphate-dependent aminotransferase family. SerC subfamily. In terms of assembly, homodimer. Requires pyridoxal 5'-phosphate as cofactor.

It localises to the cytoplasm. It catalyses the reaction O-phospho-L-serine + 2-oxoglutarate = 3-phosphooxypyruvate + L-glutamate. The enzyme catalyses 4-(phosphooxy)-L-threonine + 2-oxoglutarate = (R)-3-hydroxy-2-oxo-4-phosphooxybutanoate + L-glutamate. The protein operates within amino-acid biosynthesis; L-serine biosynthesis; L-serine from 3-phospho-D-glycerate: step 2/3. It functions in the pathway cofactor biosynthesis; pyridoxine 5'-phosphate biosynthesis; pyridoxine 5'-phosphate from D-erythrose 4-phosphate: step 3/5. Its function is as follows. Catalyzes the reversible conversion of 3-phosphohydroxypyruvate to phosphoserine and of 3-hydroxy-2-oxo-4-phosphonooxybutanoate to phosphohydroxythreonine. The protein is Phosphoserine aminotransferase of Syntrophobacter fumaroxidans (strain DSM 10017 / MPOB).